Here is a 178-residue protein sequence, read N- to C-terminus: Transcriptional repressor NrdR (178 aa).

Residues 1–21 are disordered; it reads MRCPFCGHEDTQVKDSRPHED. A zinc finger lies at 3 to 34; sequence CPFCGHEDTQVKDSRPHEDGAAIRRRRICAAC. Positions 7–21 are enriched in basic and acidic residues; the sequence is GHEDTQVKDSRPHED. One can recognise an ATP-cone domain in the interval 49-139; it reads LYVVKADDRR…VHWDFRETKD (91 aa).

This sequence belongs to the NrdR family. Zn(2+) is required as a cofactor.

Negatively regulates transcription of bacterial ribonucleotide reductase nrd genes and operons by binding to NrdR-boxes. The sequence is that of Transcriptional repressor NrdR from Gluconacetobacter diazotrophicus (strain ATCC 49037 / DSM 5601 / CCUG 37298 / CIP 103539 / LMG 7603 / PAl5).